The chain runs to 290 residues: Elongation factor Ts (290 aa).

The segment at 80–83 (TDFV) is involved in Mg(2+) ion dislocation from EF-Tu.

Belongs to the EF-Ts family.

The protein resides in the cytoplasm. In terms of biological role, associates with the EF-Tu.GDP complex and induces the exchange of GDP to GTP. It remains bound to the aminoacyl-tRNA.EF-Tu.GTP complex up to the GTP hydrolysis stage on the ribosome. In Neorickettsia sennetsu (strain ATCC VR-367 / Miyayama) (Ehrlichia sennetsu), this protein is Elongation factor Ts.